Reading from the N-terminus, the 358-residue chain is MARVLLLSLVFLAILLPALAACPQNCHCHGDLQHVICDKVGLQKIPKVSETTKLLNLQRNNFPVLAANSFRTVPNLVSLHLQHCNIREVAAGAFRGLKQLIYLYLSHNDIRVLRAGAFDDLTELTYLYLDHNKVSELPRGLLSPLVNLFILQLNNNKIRELRAGAFQGAKDLRWLYLSENALTSLHPGSLDDVENLAKFHLDRNQLSSYPSAALSKLRVVEELKLSHNPLKSIPDNAFQSFGRYLETLWLDNTNLEKFSDAAFAGVTTLKHVHLENNRLNQLPSTFPFDNLETLTLTNNPWKCTCQLRGLRRWLEAKTSRPDATCSSPAKFKGQRIRDTDALRSCKSPTKRSKKAGRH.

Positions 1–20 (MARVLLLSLVFLAILLPALA) are cleaved as a signal peptide. The LRRNT domain maps to 21 to 50 (ACPQNCHCHGDLQHVICDKVGLQKIPKVSE). A disulfide bridge connects residues Cys-22 and Cys-37. 10 LRR repeats span residues 51–72 (TTKL…SFRT), 75–96 (NLVS…AFRG), 99–120 (QLIY…AFDD), 123–144 (ELTY…LLSP), 147–168 (NLFI…AFQG), 171–192 (DLRW…SLDD), 195–216 (NLAK…ALSK), 219–240 (VVEE…AFQS), 244–265 (YLET…AFAG), and 268–289 (TLKH…FPFD). An O-linked (GalNAc...) serine glycan is attached at Ser-143. Residues 299 to 347 (NPWKCTCQLRGLRRWLEAKTSRPDATCSSPAKFKGQRIRDTDALRSCKS) form the LRRCT domain. Disulfide bonds link Cys-303–Cys-345 and Cys-305–Cys-325. The interval 321–358 (PDATCSSPAKFKGQRIRDTDALRSCKSPTKRSKKAGRH) is disordered. Basic residues predominate over residues 348–358 (PTKRSKKAGRH).

This sequence belongs to the small leucine-rich proteoglycan (SLRP) family. SLRP class IV subfamily. As to quaternary structure, mostly monomeric. As to expression, present in femoral head and rib cartilage, as well as in tendon. Detected in bone marrow.

It is found in the secreted. The protein resides in the extracellular space. Its subcellular location is the extracellular matrix. Its function is as follows. Promotes attachment of chondrocytes, fibroblasts, and osteoblasts. This binding is mediated (at least for chondrocytes and fibroblasts) by the integrin alpha(2)beta(1). May play an important role in the regulation of chondrocyte growth and proliferation. The chain is Chondroadherin (Chad) from Rattus norvegicus (Rat).